Here is a 982-residue protein sequence, read N- to C-terminus: Protein cramped (982 aa).

Disordered regions lie at residues 1-37 (MEELSKQPPPPPLTQPPPPSSSVSIEEPLPNGKGGGA), 71-111 (QKMK…GSGK), 323-349 (SLPSAASNNNNNNNETEPLQPSVASLD), 407-456 (NKRL…SSGD), and 822-851 (GTSSAGISTSGSKPDCSMNAMTASQDQEPG). Pro residues predominate over residues 7-20 (QPPPPPLTQPPPPS). Residues 21-30 (SSVSIEEPLP) show a composition bias toward low complexity. The segment covering 86–98 (SEREPNKKEEKAA) has biased composition (basic and acidic residues). Polar residues predominate over residues 100-111 (KTPSQLKTGSGK). Positions 109 to 173 (SGKTTWTNVE…HYYQTHHKIC (65 aa)) constitute an SANT domain. Residues 410–425 (LRTESGSEKRSPETKK) show a composition bias toward basic and acidic residues. Phosphoserine is present on residues S431 and S437. The segment covering 822–833 (GTSSAGISTSGS) has biased composition (low complexity).

It belongs to the cramped family. As to expression, ubiquitously expressed throughout embryonic development. High expression is detected in CNS and gonads.

The protein resides in the nucleus. In terms of biological role, polycomb group (Pc-G) genes are needed to maintain expression patterns of the homeotic selector genes of the Antennapedia (Antp-C) and Bithorax (Bx-C) complexes, and hence for the maintenance of segmental determination. Can act as a modifier of position effect variegation (PEV). This Drosophila melanogaster (Fruit fly) protein is Protein cramped (crm).